We begin with the raw amino-acid sequence, 356 residues long: 5-amino-6-(D-ribitylamino)uracil--L-tyrosine 4-hydroxyphenyl transferase (356 aa).

Residues 47–281 (VTYIVNRNIN…AIARILLNTH (235 aa)) enclose the Radical SAM core domain. The [4Fe-4S] cluster site is built by Cys-61, Cys-65, and Cys-68.

This sequence belongs to the radical SAM superfamily. CofH family. In terms of assembly, consists of two subunits, CofG and CofH. The cofactor is [4Fe-4S] cluster.

The enzyme catalyses 5-amino-6-(D-ribitylamino)uracil + L-tyrosine + S-adenosyl-L-methionine = 5-amino-5-(4-hydroxybenzyl)-6-(D-ribitylimino)-5,6-dihydrouracil + 2-iminoacetate + 5'-deoxyadenosine + L-methionine + H(+). The protein operates within cofactor biosynthesis; coenzyme F0 biosynthesis. Functionally, catalyzes the radical-mediated synthesis of 5-amino-5-(4-hydroxybenzyl)-6-(D-ribitylimino)-5,6-dihydrouracil from 5-amino-6-(D-ribitylamino)uracil and L-tyrosine. The sequence is that of 5-amino-6-(D-ribitylamino)uracil--L-tyrosine 4-hydroxyphenyl transferase from Methanococcoides burtonii (strain DSM 6242 / NBRC 107633 / OCM 468 / ACE-M).